The sequence spans 183 residues: Adenine phosphoribosyltransferase (183 aa).

This sequence belongs to the purine/pyrimidine phosphoribosyltransferase family. Homodimer.

It localises to the cytoplasm. It carries out the reaction AMP + diphosphate = 5-phospho-alpha-D-ribose 1-diphosphate + adenine. It functions in the pathway purine metabolism; AMP biosynthesis via salvage pathway; AMP from adenine: step 1/1. In terms of biological role, catalyzes a salvage reaction resulting in the formation of AMP, that is energically less costly than de novo synthesis. The sequence is that of Adenine phosphoribosyltransferase from Salmonella paratyphi C (strain RKS4594).